We begin with the raw amino-acid sequence, 386 residues long: S-adenosylmethionine synthase (386 aa).

H16 contacts ATP. A Mg(2+)-binding site is contributed by D18. Residue E44 coordinates K(+). L-methionine-binding residues include E57 and Q100. Residues 100-110 (QSPDINVGVDQ) form a flexible loop region. Residues 164–166 (DGK), 231–232 (RF), D240, 246–247 (RK), A263, and K267 each bind ATP. D240 provides a ligand contact to L-methionine. Position 271 (K271) interacts with L-methionine.

Belongs to the AdoMet synthase family. Homotetramer; dimer of dimers. Mg(2+) is required as a cofactor. K(+) serves as cofactor.

It localises to the cytoplasm. The enzyme catalyses L-methionine + ATP + H2O = S-adenosyl-L-methionine + phosphate + diphosphate. It participates in amino-acid biosynthesis; S-adenosyl-L-methionine biosynthesis; S-adenosyl-L-methionine from L-methionine: step 1/1. Catalyzes the formation of S-adenosylmethionine (AdoMet) from methionine and ATP. The overall synthetic reaction is composed of two sequential steps, AdoMet formation and the subsequent tripolyphosphate hydrolysis which occurs prior to release of AdoMet from the enzyme. The sequence is that of S-adenosylmethionine synthase from Sulfurovum sp. (strain NBC37-1).